The sequence spans 280 residues: MVARRRKRAARDPEDRIPSPLGYAAIPIKFSEKQQASHYLYVRAHSVRQGTKSTWPQKRTLFVLNVPPYCTEESLSRLLSSCGPLQSVELQEKPDLADSPKESRSKFFHPKPVPGFRVGYVVFQKPSGVSAALALQGPLLVSTESHPVKTGIHKWISDYADSVPDPEALRVEVDTFMEAYDQKIAEEEAKAKEEEGVPDEEGWVKVTRRGRRPVLPRTEAASLRVLERERRKRTRKELLNFYAWQHRESKMEHLAQLRKKFEEDKQRIELLRAQRKFRPY.

In terms of domain architecture, RRM spans 59 to 159; that stretch reads RTLFVLNVPP…TGIHKWISDY (101 aa). Ser99 bears the Phosphoserine mark.

This sequence belongs to the RRP7 family. As to quaternary structure, part of the small subunit (SSU) processome, composed of more than 70 proteins and the RNA chaperone small nucleolar RNA (snoRNA) U3. Interacts with NOL6; required for NOL6 localization to nucleolus.

It is found in the nucleus. It localises to the nucleolus. The protein resides in the cell projection. Its subcellular location is the cilium. The protein localises to the cytoplasm. It is found in the cytoskeleton. It localises to the microtubule organizing center. The protein resides in the centrosome. In terms of biological role, nucleolar protein that is involved in ribosomal RNA (rRNA) processing. Also plays a role in primary cilia resorption, and cell cycle progression in neurogenesis and neocortex development. Part of the small subunit (SSU) processome, first precursor of the small eukaryotic ribosomal subunit. During the assembly of the SSU processome in the nucleolus, many ribosome biogenesis factors, an RNA chaperone and ribosomal proteins associate with the nascent pre-rRNA and work in concert to generate RNA folding, modifications, rearrangements and cleavage as well as targeted degradation of pre-ribosomal RNA by the RNA exosome. This is Ribosomal RNA-processing protein 7 homolog A (RRP7A) from Pongo abelii (Sumatran orangutan).